The chain runs to 611 residues: Leukotriene A-4 hydrolase (611 aa).

Position 73 is an N6-acetyllysine (lysine 73). A peptide-binding positions include 135 to 137 and 267 to 272; these read QCQ and PYGGME. Histidine 296 lines the Zn(2+) pocket. Glutamate 297 (proton acceptor) is an active-site residue. Zn(2+) is bound by residues histidine 300 and glutamate 319. An N6-acetyllysine modification is found at lysine 337. The active-site Proton donor is tyrosine 384. At lysine 414 the chain carries N6-acetyllysine. A Phosphoserine modification is found at serine 416. Position 564–566 (564–566) interacts with a peptide; sequence RMK. Lysine 573 is subject to N6-acetyllysine.

Belongs to the peptidase M1 family. Monomer. The cofactor is Zn(2+). Phosphorylation at Ser-416 inhibits leukotriene-A4 hydrolase activity. Isoform 1 and isoform 2 are expressed in monocytes, lymphocytes, neutrophils, reticulocytes, platelets and fibroblasts.

Its subcellular location is the cytoplasm. It carries out the reaction leukotriene A4 + H2O = leukotriene B4. The enzyme catalyses (5S,6S)-epoxy-(18R)-hydroxy-(7E,9E,11Z,14Z,16E)-eicosapentaenoate + H2O = resolvin E1. The catalysed reaction is (5S,6S)-epoxy-(18S)-hydroxy-(7E,9E,11Z,14Z,16E)-eicosapentaenoate + H2O = 18S-resolvin E1. It catalyses the reaction Release of the N-terminal residue from a tripeptide.. The protein operates within lipid metabolism; leukotriene B4 biosynthesis. With respect to regulation, inhibited by bestatin. The epoxide hydrolase activity is restrained by suicide inactivation that involves binding of LTA4 to Tyr-379. 4-(4-benzylphenyl)thiazol-2-amine (ARM1) selectively inhibits the epoxide hydrolase activity. Functionally, bifunctional zinc metalloenzyme that comprises both epoxide hydrolase (EH) and aminopeptidase activities. Acts as an epoxide hydrolase to catalyze the conversion of LTA4 to the pro-inflammatory mediator leukotriene B4 (LTB4). Also has aminopeptidase activity, with high affinity for N-terminal arginines of various synthetic tripeptides. In addition to its pro-inflammatory EH activity, may also counteract inflammation by its aminopeptidase activity, which inactivates by cleavage another neutrophil attractant, the tripeptide Pro-Gly-Pro (PGP), a bioactive fragment of collagen generated by the action of matrix metalloproteinase-9 (MMP9) and prolylendopeptidase (PREPL). Involved also in the biosynthesis of resolvin E1 and 18S-resolvin E1 from eicosapentaenoic acid, two lipid mediators that show potent anti-inflammatory and pro-resolving actions. The chain is Leukotriene A-4 hydrolase (LTA4H) from Homo sapiens (Human).